The sequence spans 344 residues: Phosphate acyltransferase (344 aa).

This sequence belongs to the PlsX family. As to quaternary structure, homodimer. Probably interacts with PlsY.

The protein localises to the cytoplasm. It catalyses the reaction a fatty acyl-[ACP] + phosphate = an acyl phosphate + holo-[ACP]. The protein operates within lipid metabolism; phospholipid metabolism. In terms of biological role, catalyzes the reversible formation of acyl-phosphate (acyl-PO(4)) from acyl-[acyl-carrier-protein] (acyl-ACP). This enzyme utilizes acyl-ACP as fatty acyl donor, but not acyl-CoA. This Enterobacter sp. (strain 638) protein is Phosphate acyltransferase.